The chain runs to 936 residues: 2-oxoglutarate dehydrogenase E1 component (936 aa).

This sequence belongs to the alpha-ketoglutarate dehydrogenase family. Homodimer. Part of the 2-oxoglutarate dehydrogenase (OGDH) complex composed of E1 (2-oxoglutarate dehydrogenase), E2 (dihydrolipoamide succinyltransferase) and E3 (dihydrolipoamide dehydrogenase); the complex contains multiple copies of the three enzymatic components (E1, E2 and E3). Requires thiamine diphosphate as cofactor.

The catalysed reaction is N(6)-[(R)-lipoyl]-L-lysyl-[protein] + 2-oxoglutarate + H(+) = N(6)-[(R)-S(8)-succinyldihydrolipoyl]-L-lysyl-[protein] + CO2. In terms of biological role, E1 component of the 2-oxoglutarate dehydrogenase (OGDH) complex which catalyzes the decarboxylation of 2-oxoglutarate, the first step in the conversion of 2-oxoglutarate to succinyl-CoA and CO(2). This is 2-oxoglutarate dehydrogenase E1 component (sucA) from Rickettsia prowazekii (strain Madrid E).